The following is a 142-amino-acid chain: 3-hydroxyacyl-[acyl-carrier-protein] dehydratase FabZ (142 aa).

The active site involves H50.

The protein belongs to the thioester dehydratase family. FabZ subfamily.

The protein resides in the cytoplasm. It catalyses the reaction a (3R)-hydroxyacyl-[ACP] = a (2E)-enoyl-[ACP] + H2O. Its function is as follows. Involved in unsaturated fatty acids biosynthesis. Catalyzes the dehydration of short chain beta-hydroxyacyl-ACPs and long chain saturated and unsaturated beta-hydroxyacyl-ACPs. This is 3-hydroxyacyl-[acyl-carrier-protein] dehydratase FabZ from Clostridium botulinum (strain Alaska E43 / Type E3).